We begin with the raw amino-acid sequence, 328 residues long: Probable cell division protein WhiA (328 aa).

The segment at residues Ser275–Glu308 is a DNA-binding region (H-T-H motif).

Belongs to the WhiA family.

Its function is as follows. Involved in cell division and chromosome segregation. In Corynebacterium urealyticum (strain ATCC 43042 / DSM 7109), this protein is Probable cell division protein WhiA.